Consider the following 84-residue polypeptide: Small ribosomal subunit protein uS15 (84 aa).

It belongs to the universal ribosomal protein uS15 family. In terms of assembly, part of the 30S ribosomal subunit. Forms a bridge to the 50S subunit in the 70S ribosome, contacting the 23S rRNA.

In terms of biological role, one of the primary rRNA binding proteins, it binds directly to 16S rRNA where it helps nucleate assembly of the platform of the 30S subunit by binding and bridging several RNA helices of the 16S rRNA. Forms an intersubunit bridge (bridge B4) with the 23S rRNA of the 50S subunit in the ribosome. This is Small ribosomal subunit protein uS15 from Akkermansia muciniphila (strain ATCC BAA-835 / DSM 22959 / JCM 33894 / BCRC 81048 / CCUG 64013 / CIP 107961 / Muc).